The following is a 335-amino-acid chain: Phosphate acyltransferase (335 aa).

This sequence belongs to the PlsX family. Homodimer. Probably interacts with PlsY.

It is found in the cytoplasm. It carries out the reaction a fatty acyl-[ACP] + phosphate = an acyl phosphate + holo-[ACP]. It functions in the pathway lipid metabolism; phospholipid metabolism. Its function is as follows. Catalyzes the reversible formation of acyl-phosphate (acyl-PO(4)) from acyl-[acyl-carrier-protein] (acyl-ACP). This enzyme utilizes acyl-ACP as fatty acyl donor, but not acyl-CoA. The protein is Phosphate acyltransferase of Desulfitobacterium hafniense (strain Y51).